We begin with the raw amino-acid sequence, 97 residues long: Ferredoxin-thioredoxin reductase, variable chain (97 aa).

Belongs to the ferredoxin thioredoxin reductase alpha subunit family. Heterodimer of subunit A (variable subunit) and subunit B (catalytic subunit). Heterodimeric FTR forms a complex with ferredoxin and thioredoxin.

It localises to the plastid. It is found in the chloroplast. Functionally, variable subunit of the ferredoxin-thioredoxin reductase (FTR), which catalyzes the two-electron reduction of thioredoxins by the electrons provided by reduced ferredoxin. This Zea mays (Maize) protein is Ferredoxin-thioredoxin reductase, variable chain.